We begin with the raw amino-acid sequence, 467 residues long: Indoleacetamide hydrolase (467 aa).

Active-site charge relay system residues include K74 and S149. S173 (acyl-ester intermediate) is an active-site residue.

This sequence belongs to the amidase family.

It functions in the pathway plant hormone metabolism; auxin biosynthesis. Functionally, hydrolyzes indole-3-acetamide (IAM) into indole-3-acetic acid (IAA). This chain is Indoleacetamide hydrolase (tms2), found in Rhizobium radiobacter (Agrobacterium tumefaciens).